The following is a 439-amino-acid chain: Ribosomal protein uS12 methylthiotransferase RimO (439 aa).

The MTTase N-terminal domain occupies 4–114 (PKVGFVSLGR…VVRAVHGVAP (111 aa)). The 238-residue stretch at 133-370 (LTPRHYAYLK…MEHQQAISTA (238 aa)) folds into the Radical SAM core domain. The [4Fe-4S] cluster site is built by Cys-147, Cys-151, and Cys-154. The TRAM domain occupies 373–439 (STRVGREIDV…EYDLWGERIA (67 aa)).

This sequence belongs to the methylthiotransferase family. RimO subfamily. [4Fe-4S] cluster is required as a cofactor.

The protein localises to the cytoplasm. It catalyses the reaction L-aspartate(89)-[ribosomal protein uS12]-hydrogen + (sulfur carrier)-SH + AH2 + 2 S-adenosyl-L-methionine = 3-methylsulfanyl-L-aspartate(89)-[ribosomal protein uS12]-hydrogen + (sulfur carrier)-H + 5'-deoxyadenosine + L-methionine + A + S-adenosyl-L-homocysteine + 2 H(+). Catalyzes the methylthiolation of an aspartic acid residue of ribosomal protein uS12. This Bordetella bronchiseptica (strain ATCC BAA-588 / NCTC 13252 / RB50) (Alcaligenes bronchisepticus) protein is Ribosomal protein uS12 methylthiotransferase RimO.